The primary structure comprises 7639 residues: Nonribosomal peptide synthetase 4 (7639 aa).

An adenylation 1 region spans residues 244 to 636 (WQGAMRPDAE…AGRKDAQIKF (393 aa)). One can recognise a Carrier 1 domain in the interval 776–852 (TFSNGTESQL…ALARHVKEIE (77 aa)). S813 bears the O-(pantetheine 4'-phosphoryl)serine mark. Residues 865–1295 (FELSPIQRLY…EQNLSLLVES (431 aa)) form an epimerization 1 region. The segment at 1337–1767 (VEDIYPCSPM…HLGPRHHQQI (431 aa)) is condensation 1. The interval 1786 to 2181 (FEEQAILRPE…FGRKDTQVKL (396 aa)) is adenylation 2. The 77-residue stretch at 2313 to 2389 (APASDMEKQL…DMAQSALPLS (77 aa)) folds into the Carrier 2 domain. S2350 is subject to O-(pantetheine 4'-phosphoryl)serine. The condensation 2 stretch occupies residues 2426 to 2852 (VEDIYPCTPL…LISTRDYQSL (427 aa)). The tract at residues 2878-3269 (QPLDKLAVCA…QGRKDNQVKI (392 aa)) is adenylation 3. In terms of domain architecture, Carrier 3 spans 3403–3479 (REATETETKL…KLASFVQAVE (77 aa)). S3440 carries the post-translational modification O-(pantetheine 4'-phosphoryl)serine. Residues 3491-3928 (AFPLSPIQKL…RMTQAKAEPQ (438 aa)) form an epimerization 2 region. The segment at 3961–4389 (EAVYPCSPVQ…VSDDCAQQLT (429 aa)) is condensation 3. Positions 4407 to 4810 (FERNVQSLPH…VSRKDTQIKL (404 aa)) are adenylation 4. A Carrier 4 domain is found at 4944–5020 (APTTMMQRKL…EMATCCGHSE (77 aa)). At S4981 the chain carries O-(pantetheine 4'-phosphoryl)serine. Residues 5058–5478 (QDLYPCSSLQ…QFCSEEDLQM (421 aa)) are condensation 4. An adenylation 5 region spans residues 5498-5900 (FWQSVATYHD…IGRKDNQVKL (403 aa)). In terms of domain architecture, Carrier 5 spans 6039 to 6115 (TDTTFVGQLL…DLVTLIEKEG (77 aa)). S6076 bears the O-(pantetheine 4'-phosphoryl)serine mark. The segment at 6133 to 6567 (FALSPIQQLF…EVLGNMAMEL (435 aa)) is epimerization 3. The segment at 6607-7032 (VEDMYPCSPM…EALSHLRVSQ (426 aa)) is condensation 5. A Carrier 6 domain is found at 7088–7164 (RDKDQVYNKL…TLLNCLRDKS (77 aa)). S7125 carries the post-translational modification O-(pantetheine 4'-phosphoryl)serine. Residues 7254–7603 (LDGEGPLDVA…SNTEVCFLYR (350 aa)) form a condensation 6 region.

This sequence belongs to the NRP synthetase family.

It carries out the reaction D-allo-threonine + D-leucine + D-alanine + L-proline + 2 L-leucine + A = fusahexin + AH2 + 6 H2O. Its pathway is secondary metabolite biosynthesis. Its function is as follows. Nonribosomal peptide synthetase; part of the gene cluster that mediates the biosynthesis of the fusahexin, a cyclic hydrophobic hexapeptide with the amino acid sequence cyclo-(D-Ala-L-Leu-D-allo-Thr-L-Pro-D-Leu-L-Leu) that plays an important role in cell surface hydrophobicity. Fusahexin might also play a role in virulence, sensitivity to osmotic stress and oxidative stress. NRPS4 is the only enzyme within the cluster and its 5 catalytic modules are sufficient to produce fusahexin. The modules 1 to 4 incorporate respectively D-alanine, L-leucine, D-allo-threonine, and L-proline, which is supported by the presence of epimerase domains in modules 1 and 3, which incorporate D-amino acids. The terminal module is responsible for incorporation of the two adjacent leucine units, where the epimerase domain is only used to convert the first unit to D-leucine. The terminal condensation domain (Ct) is involved in cyclization with D-alanine and thereby releasing of fusahexin. The chain is Nonribosomal peptide synthetase 4 from Gibberella zeae (strain ATCC MYA-4620 / CBS 123657 / FGSC 9075 / NRRL 31084 / PH-1) (Wheat head blight fungus).